The sequence spans 340 residues: Serpentine receptor class alpha-18 (340 aa).

Transmembrane regions (helical) follow at residues 29–49, 109–129, 149–169, 198–218, 249–269, and 285–305; these read FNFI…WLAI, VFEL…VFSL, FIAT…FYIV, VRTG…YVCV, ISIV…NLLI, and IVSF…VIYF.

Belongs to the nematode receptor-like protein sra family.

The protein resides in the membrane. The protein is Serpentine receptor class alpha-18 (sra-18) of Caenorhabditis elegans.